Here is a 132-residue protein sequence, read N- to C-terminus: Small ribosomal subunit protein uS8 (132 aa).

It belongs to the universal ribosomal protein uS8 family. Part of the 30S ribosomal subunit. Contacts proteins S5 and S12.

Its function is as follows. One of the primary rRNA binding proteins, it binds directly to 16S rRNA central domain where it helps coordinate assembly of the platform of the 30S subunit. In Rhodopseudomonas palustris (strain BisA53), this protein is Small ribosomal subunit protein uS8.